Consider the following 354-residue polypeptide: Chorismate synthase (354 aa).

Arg48 is an NADP(+) binding site. Residues 125-127, 239-240, Gly280, 295-299, and Arg321 contribute to the FMN site; these read RSS, NA, and KPVAT.

Belongs to the chorismate synthase family. Homotetramer. Requires FMNH2 as cofactor.

The enzyme catalyses 5-O-(1-carboxyvinyl)-3-phosphoshikimate = chorismate + phosphate. It functions in the pathway metabolic intermediate biosynthesis; chorismate biosynthesis; chorismate from D-erythrose 4-phosphate and phosphoenolpyruvate: step 7/7. Functionally, catalyzes the anti-1,4-elimination of the C-3 phosphate and the C-6 proR hydrogen from 5-enolpyruvylshikimate-3-phosphate (EPSP) to yield chorismate, which is the branch point compound that serves as the starting substrate for the three terminal pathways of aromatic amino acid biosynthesis. This reaction introduces a second double bond into the aromatic ring system. The sequence is that of Chorismate synthase from Christiangramia forsetii (strain DSM 17595 / CGMCC 1.15422 / KT0803) (Gramella forsetii).